Consider the following 76-residue polypeptide: Bomanin Tailed 2 (76 aa).

Positions 1–22 (MKALQVAGTLMLLFCLLAAVNA) are cleaved as a signal peptide. The propeptide at 23–24 (TP) is removed by a dipeptidylpeptidase. An intrachain disulfide couples Cys33 to Cys36.

This sequence belongs to the bomanin family.

It is found in the secreted. In terms of biological role, secreted immune-induced peptide induced by Toll signaling. Has a role in resistance to bacterial and fungal infections. The strength of antimicrobial activity appears to correlate with the overall level of expression. The sequence is that of Bomanin Tailed 2 from Drosophila melanogaster (Fruit fly).